The primary structure comprises 270 residues: Putative phosphoenolpyruvate synthase regulatory protein (270 aa).

149-156 (GVSRSGKT) is a binding site for ADP.

This sequence belongs to the pyruvate, phosphate/water dikinase regulatory protein family. PSRP subfamily.

It carries out the reaction [pyruvate, water dikinase] + ADP = [pyruvate, water dikinase]-phosphate + AMP + H(+). The catalysed reaction is [pyruvate, water dikinase]-phosphate + phosphate + H(+) = [pyruvate, water dikinase] + diphosphate. Its function is as follows. Bifunctional serine/threonine kinase and phosphorylase involved in the regulation of the phosphoenolpyruvate synthase (PEPS) by catalyzing its phosphorylation/dephosphorylation. The sequence is that of Putative phosphoenolpyruvate synthase regulatory protein from Pseudoalteromonas atlantica (strain T6c / ATCC BAA-1087).